The sequence spans 107 residues: Magnetosome protein MmsF (107 aa).

The Cytoplasmic segment spans residues 1 to 13; it reads MTEAILRSTLGAR. The helical transmembrane segment at 14–34 threads the bilayer; sequence TTVMAALSYLSVLCFVPLLVD. At 35–46 the chain is on the lumenal side; the sequence is RDDEFVYFHAKQ. Residues 47–67 traverse the membrane as a helical segment; sequence GLVIWMWGVLALFALHVPVLG. Residues 68–69 lie on the Cytoplasmic side of the membrane; sequence KW. The chain crosses the membrane as a helical span at residues 70–90; sequence IFGFSSMGVLVFSLLGLVSVV. Over 91-107 the chain is Lumenal; sequence FQRAWKLPLISWVAHRI.

It belongs to the magnetosome MamF/MmsF protein family. As to quaternary structure, may oligomerize.

The protein localises to the magnetosome membrane. Its function may be negatively regulated by one of the MamGFDC proteins. Functionally, plays a major role in synthesis of cubooctahedral magnetite crystals by controlling crystal growth and morphology after nucleation. Has a partially redundant function with MamF. When overexpressed in E.coli the soluble protein self assembles into shells of about 36 nm. This protein mediates the formation of magnetite nanoparticles from a solution of Fe(2+) and Fe(3+) sulfate; the crystals are larger and lack alternative iron oxide/oxyhydroxide species seen in the protein's absence. This is Magnetosome protein MmsF from Paramagnetospirillum magneticum (strain ATCC 700264 / AMB-1) (Magnetospirillum magneticum).